A 287-amino-acid polypeptide reads, in one-letter code: ATP synthase gamma chain (287 aa).

It belongs to the ATPase gamma chain family. In terms of assembly, F-type ATPases have 2 components, CF(1) - the catalytic core - and CF(0) - the membrane proton channel. CF(1) has five subunits: alpha(3), beta(3), gamma(1), delta(1), epsilon(1). CF(0) has three main subunits: a, b and c.

Its subcellular location is the cell inner membrane. Produces ATP from ADP in the presence of a proton gradient across the membrane. The gamma chain is believed to be important in regulating ATPase activity and the flow of protons through the CF(0) complex. This Serratia proteamaculans (strain 568) protein is ATP synthase gamma chain.